Consider the following 335-residue polypeptide: Probable E3 ubiquitin-protein ligase BAH1-like (335 aa).

An SPX domain is found at 1–163 (MKFGETFTEY…SSENGKNFKL (163 aa)). An RING-type zinc finger spans residues 231 to 280 (CAICLETVFNPYALKCGHIFCNSCACSAASVLIFQGIKAAPRHSKCPICR).

Belongs to the RING-type zinc finger family.

It catalyses the reaction S-ubiquitinyl-[E2 ubiquitin-conjugating enzyme]-L-cysteine + [acceptor protein]-L-lysine = [E2 ubiquitin-conjugating enzyme]-L-cysteine + N(6)-ubiquitinyl-[acceptor protein]-L-lysine.. The protein operates within protein modification; protein ubiquitination. In Arabidopsis thaliana (Mouse-ear cress), this protein is Probable E3 ubiquitin-protein ligase BAH1-like (RF178).